The primary structure comprises 241 residues: Small ribosomal subunit protein uS3 (241 aa).

Residues 39–109 form the KH type-2 domain; the sequence is IRQYITKNLS…QIRINVIEVQ (71 aa). Residues 214-241 form a disordered region; the sequence is EEIPMPVPSQTPRRQRRRQQFEDRSGEE. Over residues 232 to 241 the composition is skewed to basic and acidic residues; that stretch reads QQFEDRSGEE.

This sequence belongs to the universal ribosomal protein uS3 family. Part of the 30S ribosomal subunit. Forms a tight complex with proteins S10 and S14.

Functionally, binds the lower part of the 30S subunit head. Binds mRNA in the 70S ribosome, positioning it for translation. In Rippkaea orientalis (strain PCC 8801 / RF-1) (Cyanothece sp. (strain PCC 8801)), this protein is Small ribosomal subunit protein uS3.